Reading from the N-terminus, the 588-residue chain is Serine/threonine-protein kinase CBK1 (588 aa).

Disordered stretches follow at residues 1 to 76 (MTDK…HQQQ) and 100 to 139 (QHQQ…RDRA). The span at 29-42 (LYQQNSNQSNTSLD) shows a compositional bias: polar residues. 2 stretches are compositionally biased toward low complexity: residues 43–76 (QQQQ…HQQQ) and 100–117 (QHQQ…AQQQ). Residues 207 to 517 (FVTVKVIGKG…ANEIKSHPFF (311 aa)) enclose the Protein kinase domain. ATP contacts are provided by residues 213-221 (IGKGAFGEV) and K236. The Proton acceptor role is filled by D330. The tract at residues 370-389 (GTSSNPATQMGPPQNTNRQS) is disordered. One can recognise an AGC-kinase C-terminal domain in the interval 518–586 (RGVDWSSIRE…SRFDNMTRRN (69 aa)).

It belongs to the protein kinase superfamily. STE Ser/Thr protein kinase family. COT1 subfamily.

The enzyme catalyses L-seryl-[protein] + ATP = O-phospho-L-seryl-[protein] + ADP + H(+). It carries out the reaction L-threonyl-[protein] + ATP = O-phospho-L-threonyl-[protein] + ADP + H(+). Its function is as follows. Protein kinase that seems to play a role in the regulation of cell morphogenesis and proliferation. The polypeptide is Serine/threonine-protein kinase CBK1 (CBK1) (Yarrowia lipolytica (strain CLIB 122 / E 150) (Yeast)).